Here is a 435-residue protein sequence, read N- to C-terminus: Acetylcholine receptor-like protein cup-4 (435 aa).

Positions Met1–Ala24 are cleaved as a signal peptide. N-linked (GlcNAc...) asparagine glycans are attached at residues Asn41, Asn68, Asn237, and Asn249. 2 consecutive transmembrane segments (helical) span residues Val298–Leu318 and Ile341–Leu361. N-linked (GlcNAc...) asparagine glycosylation is present at Asn403. A helical transmembrane segment spans residues Pro413–Val433.

Belongs to the ligand-gated ion channel (TC 1.A.9) family. Acetylcholine receptor (TC 1.A.9.1) subfamily.

The protein localises to the cytoplasmic vesicle membrane. Thought to regulate endocytosis in coelomocytes through modulation of phospholipase C activity. Possible acetylcholine receptor. The protein is Acetylcholine receptor-like protein cup-4 of Caenorhabditis briggsae.